The primary structure comprises 201 residues: Recombination protein RecR (201 aa).

The segment at 60 to 75 (CHACGNVDTSDPCTIC) adopts a C4-type zinc-finger fold. The Toprim domain occupies 83–178 (TTLVVVEDVS…TITRLAHGVP (96 aa)).

Belongs to the RecR family.

May play a role in DNA repair. It seems to be involved in an RecBC-independent recombinational process of DNA repair. It may act with RecF and RecO. This Methylorubrum populi (strain ATCC BAA-705 / NCIMB 13946 / BJ001) (Methylobacterium populi) protein is Recombination protein RecR.